The primary structure comprises 444 residues: NADH-quinone oxidoreductase subunit F (444 aa).

An NAD(+)-binding site is contributed by 62–71 (GRGGAGFLTG). 177 to 224 (GAGRYICGEETALINSLEGRRANPRFKPPFPAYVGLWGKPTCVNNVET) contributes to the FMN binding site. Positions 354, 357, 360, and 401 each coordinate [4Fe-4S] cluster.

Belongs to the complex I 51 kDa subunit family. As to quaternary structure, composed of 13 different subunits. Subunits NuoCD, E, F, and G constitute the peripheral sector of the complex. [4Fe-4S] cluster serves as cofactor. It depends on FMN as a cofactor.

It carries out the reaction a quinone + NADH + 5 H(+)(in) = a quinol + NAD(+) + 4 H(+)(out). Functionally, NDH-1 shuttles electrons from NADH, via FMN and iron-sulfur (Fe-S) centers, to quinones in the respiratory chain. Couples the redox reaction to proton translocation (for every two electrons transferred, four hydrogen ions are translocated across the cytoplasmic membrane), and thus conserves the redox energy in a proton gradient. In Buchnera aphidicola subsp. Baizongia pistaciae (strain Bp), this protein is NADH-quinone oxidoreductase subunit F (nuoF).